A 245-amino-acid polypeptide reads, in one-letter code: Large ribosomal subunit protein uL29m (245 aa).

Composition is skewed to low complexity over residues 36 to 49 (SFNSQRSQFSTSSS) and 234 to 245 (STKSETTTSKNI). Disordered stretches follow at residues 36–98 (SFNS…NPDH) and 207–245 (RPSPDEVLEEETETAMPTEVMPEELDSSTKSETTTSKNI).

The protein belongs to the universal ribosomal protein uL29 family. As to quaternary structure, component of the mitochondrial large ribosomal subunit. Mature mitochondrial ribosomes consist of a small (37S) and a large (54S) subunit. The 37S subunit contains at least 33 different proteins and 1 molecule of RNA (15S). The 54S subunit contains at least 45 different proteins and 1 molecule of RNA (21S).

Its subcellular location is the mitochondrion. This Coccidioides immitis (strain RS) (Valley fever fungus) protein is Large ribosomal subunit protein uL29m (MRPL4).